The sequence spans 346 residues: Elongation factor Ts (346 aa).

Residues 80-83 (TDFV) form an involved in Mg(2+) ion dislocation from EF-Tu region.

This sequence belongs to the EF-Ts family.

It is found in the cytoplasm. Functionally, associates with the EF-Tu.GDP complex and induces the exchange of GDP to GTP. It remains bound to the aminoacyl-tRNA.EF-Tu.GTP complex up to the GTP hydrolysis stage on the ribosome. The chain is Elongation factor Ts from Streptococcus pneumoniae serotype 19F (strain G54).